A 297-amino-acid polypeptide reads, in one-letter code: T-cell leukemia homeobox protein 3 (297 aa).

Residues 1–68 (MEPAAGAQGP…LGGPRGGAPY (68 aa)) are disordered. The segment covering 32–52 (APPPPPPPPPPPPPPPPPPRG) has biased composition (pro residues). Positions 172–231 (RKKPRTSFSRVQICELEKRFHRQKYLASAERAALAKSLKMTDAQVKTWFQNRRTKWRRQT) form a DNA-binding region, homeobox.

In terms of tissue distribution, expression is restricted to neurons in the peripheral and central nervous system.

The protein resides in the nucleus. Seems to be involved in the development of cranial sensory innervation from peripheral ganglia. The sequence is that of T-cell leukemia homeobox protein 3 (TLX3) from Gallus gallus (Chicken).